The primary structure comprises 288 residues: Transposase InsF for insertion sequence IS3fB (288 aa).

An Integrase catalytic domain is found at Tyr-124 to Leu-287.

This sequence belongs to the transposase IS3/IS150/IS904 family.

Functionally, involved in the transposition of the insertion sequence IS3. The chain is Transposase InsF for insertion sequence IS3fB (insF7) from Escherichia coli (strain K12).